Consider the following 470-residue polypeptide: Serine--tRNA ligase (470 aa).

272-274 (TAE) contacts L-serine. 303-305 (RAE) is an ATP binding site. Glutamate 326 lines the L-serine pocket. 393-396 (EISS) contributes to the ATP binding site. Serine 428 contributes to the L-serine binding site.

This sequence belongs to the class-II aminoacyl-tRNA synthetase family. Type-1 seryl-tRNA synthetase subfamily. Homodimer. The tRNA molecule binds across the dimer.

The protein localises to the cytoplasm. The catalysed reaction is tRNA(Ser) + L-serine + ATP = L-seryl-tRNA(Ser) + AMP + diphosphate + H(+). The enzyme catalyses tRNA(Sec) + L-serine + ATP = L-seryl-tRNA(Sec) + AMP + diphosphate + H(+). It participates in aminoacyl-tRNA biosynthesis; selenocysteinyl-tRNA(Sec) biosynthesis; L-seryl-tRNA(Sec) from L-serine and tRNA(Sec): step 1/1. Its function is as follows. Catalyzes the attachment of serine to tRNA(Ser). Is also able to aminoacylate tRNA(Sec) with serine, to form the misacylated tRNA L-seryl-tRNA(Sec), which will be further converted into selenocysteinyl-tRNA(Sec). In Nitrobacter hamburgensis (strain DSM 10229 / NCIMB 13809 / X14), this protein is Serine--tRNA ligase.